The primary structure comprises 175 residues: Bifunctional protein PyrR (175 aa).

The PRPP-binding signature appears at 98–110 (VIIIDDVLYTGRT).

This sequence belongs to the purine/pyrimidine phosphoribosyltransferase family. PyrR subfamily. Homodimer and homohexamer; in equilibrium.

It catalyses the reaction UMP + diphosphate = 5-phospho-alpha-D-ribose 1-diphosphate + uracil. Functionally, regulates transcriptional attenuation of the pyrimidine nucleotide (pyr) operon by binding in a uridine-dependent manner to specific sites on pyr mRNA. This disrupts an antiterminator hairpin in the RNA and favors formation of a downstream transcription terminator, leading to a reduced expression of downstream genes. Its function is as follows. Also displays a weak uracil phosphoribosyltransferase activity which is not physiologically significant. The polypeptide is Bifunctional protein PyrR (Staphylococcus carnosus (strain TM300)).